A 520-amino-acid chain; its full sequence is Trichothecene O-acetyltransferase TRI3 (520 aa).

The disordered stretch occupies residues 1–23; sequence MGSKLPELPKLSPEKHRWEKSNV. The span at 12-23 shows a compositional bias: basic and acidic residues; sequence SPEKHRWEKSNV.

The protein belongs to the trichothecene O-acetyltransferase family.

It functions in the pathway sesquiterpene biosynthesis; trichothecene biosynthesis. In terms of biological role, trichothecene O-acetyltransferase; part of the gene cluster that mediates the production of the antimicrobial trichothecene harzianum A (HA) that plays a role in Botrytis cinerea antagonistic activity and plant defense priming. The biosynthesis of harzianum A begins with the cyclization of farnesyl diphosphate to trichodiene and is catalyzed by the trichodiene synthase TRI5. Trichodiene undergoes a series of oxygenations catalyzed by the cytochrome P450 monooxygenase TRI4. TRI4 controls the addition of 3 oxygens at C-2, C-11, and the C-12, C-13-epoxide to form the intermediate isotrichodiol. Isotrichodiol then undergoes a non-enzymatic isomerization and cyclization to form 12,13-epoxytrichothec-9-ene (EPT) which is further converted to trichodermol by the cytochrome P450 monooxygenase TRI11 via C-4 hydroxylation. The last step of HA synthesis is esterification of an octatriendioyl moiety to the C-4 oxygen of trichodermol. The octatriendioyl moiety is probably produced by the polyketide synthase TRI17 and the esterification performed by the trichothecene O-acetyltransferase TRI3. The polypeptide is Trichothecene O-acetyltransferase TRI3 (Trichoderma arundinaceum).